We begin with the raw amino-acid sequence, 485 residues long: MNESVTIRGKDRYKSGVMEYKKMGYWEPDYEPKDTDIIALFRVTPQDGVDPTEASAAVAGESSTATWTVVWTDRLTAAEKYRAKCYRVDPVPNSPGQFFAYIAYDLDLFENGSIANLSASIIGNVFGFKPLKALRLEDMRLPVAYVKTFQGPATGIVVERERMDKFGRPLLGATVKPKLGLSGRNYGRVVYEALKGGLDFTKDDENINSQPFMHWRERFLYCMEAVNKAQAASGEIKGTYLNVTAGTMEEMYERAEFAKQLGSVIIMIDLVIGYTAIQSMAKWARRNDMILHLHRAGHSTYTRQRNHGVSFRVIAKWMRLAGVDHIHAGTVVGKLEGDPATTKGYYDICREDYNPMQLEHGIFFEQNWASLNKLMPVASGGIHAGQMHQLLDHLGEDVVLQFGGGTIGHPMGIQAGATANRVALEAMIMARNEGRDYLHEGEEILAKAALTCTPLKAALETWKNVTFNYESTDMPDYAPTPSVSM.

The substrate site is built by N124 and T174. K176 (proton acceptor) is an active-site residue. K178 contributes to the substrate binding site. Mg(2+) contacts are provided by K202, D204, and E205. N6-carboxylysine is present on K202. Residue H294 is the Proton acceptor of the active site. The substrate site is built by R295, H327, and S379.

Belongs to the RuBisCO large chain family. Type I subfamily. In terms of assembly, heterohexadecamer of 8 large chains and 8 small chains. The cofactor is Mg(2+).

The enzyme catalyses 2 (2R)-3-phosphoglycerate + 2 H(+) = D-ribulose 1,5-bisphosphate + CO2 + H2O. It catalyses the reaction D-ribulose 1,5-bisphosphate + O2 = 2-phosphoglycolate + (2R)-3-phosphoglycerate + 2 H(+). Its function is as follows. RuBisCO catalyzes two reactions: the carboxylation of D-ribulose 1,5-bisphosphate, the primary event in carbon dioxide fixation, as well as the oxidative fragmentation of the pentose substrate in the photorespiration process. Both reactions occur simultaneously and in competition at the same active site. This Rhodopseudomonas palustris (strain BisB18) protein is Ribulose bisphosphate carboxylase large chain.